A 1379-amino-acid chain; its full sequence is DNA-directed RNA polymerase subunit beta'' (1379 aa).

The Zn(2+) site is built by Cys-220, Cys-293, Cys-300, and Cys-303.

The protein belongs to the RNA polymerase beta' chain family. RpoC2 subfamily. In plastids the minimal PEP RNA polymerase catalytic core is composed of four subunits: alpha, beta, beta', and beta''. When a (nuclear-encoded) sigma factor is associated with the core the holoenzyme is formed, which can initiate transcription. Requires Zn(2+) as cofactor.

The protein localises to the plastid. It is found in the chloroplast. The enzyme catalyses RNA(n) + a ribonucleoside 5'-triphosphate = RNA(n+1) + diphosphate. In terms of biological role, DNA-dependent RNA polymerase catalyzes the transcription of DNA into RNA using the four ribonucleoside triphosphates as substrates. This is DNA-directed RNA polymerase subunit beta'' from Crucihimalaya wallichii (Rock-cress).